Consider the following 150-residue polypeptide: NmrA-like family domain-containing protein 1 (150 aa).

NADP(+)-binding positions include 7–12 (GATGAQ), 33–37 (RNPEQ), and Lys-71.

The protein belongs to the NmrA-type oxidoreductase family. As to quaternary structure, homodimer. Interacts with ASS1. Interaction is enhanced by low NADPH/NADP(+) ratios, which results in inhibition of ASS1 activity.

The protein localises to the cytoplasm. Its subcellular location is the perinuclear region. It is found in the nucleus. Redox sensor protein. Undergoes restructuring and subcellular redistribution in response to changes in intracellular NADPH/NADP(+) levels. At low NADPH concentrations the protein is found mainly as a monomer, and binds argininosuccinate synthase (ASS1), the enzyme involved in nitric oxide synthesis. Association with ASS1 impairs its activity and reduces the production of nitric oxide, which subsecuently prevents apoptosis. Under normal NADPH concentrations, the protein is found as a dimer and hides the binding site for ASS1. The homodimer binds one molecule of NADPH. Has higher affinity for NADPH than for NADP(+). Binding to NADPH is necessary to form a stable dimer. In Rattus norvegicus (Rat), this protein is NmrA-like family domain-containing protein 1.